Reading from the N-terminus, the 440-residue chain is Protein OSB3, chloroplastic/mitochondrial (440 aa).

A chloroplast and mitochondrion-targeting transit peptide spans 1–61 (MNLISRTLTR…AKVSVKPPLN (61 aa)). In terms of domain architecture, SSB spans 80–178 (ISNWINLIGF…VMVQNLNFVQ (99 aa)). PDF region stretches follow at residues 218-270 (WKHL…LKLE), 294-342 (WKDL…SKLP), and 380-428 (WKNL…SKLP).

As to expression, expressed primarily in the female gametophyte and in the floral abscission zone.

It localises to the mitochondrion. The protein localises to the plastid. It is found in the chloroplast. Its function is as follows. Binds single-stranded DNA. This chain is Protein OSB3, chloroplastic/mitochondrial (OSB3), found in Arabidopsis thaliana (Mouse-ear cress).